Reading from the N-terminus, the 1104-residue chain is MNKWLNTLSKTFTFRLLNCHYRRSLPLCQNFSLKKSLTHNQVRFFKMSDLDNLPPVDPKTGEVIINPLKEDGSPKTPKEIEKEKKKAEKLLKFAAKQAKKNAAATTGASQKKPKKKKEVEPIPEFIDKTVPGEKKILVSLDDPALKAYNPANVESSWYDWWIKTGVFEPEFTADGKVKPEGVFCIPAPPPNVTGALHIGHALTIAIQDSLIRYNRMKGKTVLFLPGFDHAGIATQSVVEKQIWAKDRKTRHDYGREAFVGKVWEWKEEYHSRIKNQIQKLGASYDWSREAFTLSPELTKSVEEAFVRLHDEGVIYRASRLVNWSVKLNTAISNLEVENKDVKSRTLLSVPGYDEKVEFGVLTSFAYPVIGSDEKLIIATTRPETIFGDTAVAVHPDDDRYKHLHGKFIQHPFLPRKIPIITDKEAVDMEFGTGAVKITPAHDQNDYNTGKRHNLEFINILTDDGLLNEECGPEWQGMKRFDARKKVIEQLKEKNLYVGQEDNEMTIPTCSRSGDIIEPLLKPQWWVSQSEMAKDAIKVVRDGQITITPKSSEAEYFHWLGNIQDWCISRQLWWGHRCPVYFINIEGEEHDRIDGDYWVAGRSMEEAEKKAAAKYPNSKFTLEQDEDVLDTWFSSGLWPFSTLGWPEKTKDMETFYPFSMLETGWDILFFWVTRMILLGLKLTGSVPFKEVFCHSLVRDAQGRKMSKSLGNVIDPLDVITGIKLDDLHAKLLQGNLDPREVEKAKIGQKESYPNGIPQCGTDAMRFALCAYTTGGRDINLDILRVEGYRKFCNKIYQATKFALMRLGDDYQPPATEGLSGNESLVEKWILHKLTETSKIVNEALDKRDFLTSTSSIYEFWYLICDVYIENSKYLIQEGSAIEKKSAKDTLYILLDNALKLIHPFMPFISEEMWQRLPKRSTEKAASIVKASYPVYVSEYDDVKSANAYDLVLNITKEARSLLSEYNILKNGKVFVESNHEEYFKTAEDQKDSIVSLIKAIDEVTVVRDASEIPEGCVLQSVNPEVNVHLLVKGHVDIDAEIAKVQKKLEKAKKSKNGIEQTINSKDYETKANTQAKEANKSKLDNTVAEIEGLEATIENLKRLKL.

The transit peptide at 1-47 (MNKWLNTLSKTFTFRLLNCHYRRSLPLCQNFSLKKSLTHNQVRFFKM) directs the protein to the mitochondrion. Residue Ser-73 is modified to Phosphoserine. The interval 99 to 119 (KKNAAATTGASQKKPKKKKEV) is disordered. Positions 190-200 (PNVTGALHIGH) match the 'HIGH' region motif. Residues Ser-294 and Ser-332 each carry the phosphoserine modification. The short motif at 703-707 (KMSKS) is the 'KMSKS' region element. Lys-706 is an ATP binding site. Ser-707 bears the Phosphoserine mark. Thr-1003 carries the post-translational modification Phosphothreonine.

This sequence belongs to the class-I aminoacyl-tRNA synthetase family.

It localises to the cytoplasm. The protein localises to the mitochondrion. The catalysed reaction is tRNA(Val) + L-valine + ATP = L-valyl-tRNA(Val) + AMP + diphosphate. This Saccharomyces cerevisiae (strain ATCC 204508 / S288c) (Baker's yeast) protein is Valine--tRNA ligase, mitochondrial (VAS1).